A 328-amino-acid polypeptide reads, in one-letter code: tRNA U34 carboxymethyltransferase (328 aa).

Carboxy-S-adenosyl-L-methionine is bound by residues K91, W105, K110, G130, 181 to 182 (IE), M196, Y200, and R315.

The protein belongs to the class I-like SAM-binding methyltransferase superfamily. CmoB family. Homotetramer.

The enzyme catalyses carboxy-S-adenosyl-L-methionine + 5-hydroxyuridine(34) in tRNA = 5-carboxymethoxyuridine(34) in tRNA + S-adenosyl-L-homocysteine + H(+). Catalyzes carboxymethyl transfer from carboxy-S-adenosyl-L-methionine (Cx-SAM) to 5-hydroxyuridine (ho5U) to form 5-carboxymethoxyuridine (cmo5U) at position 34 in tRNAs. This is tRNA U34 carboxymethyltransferase from Pectobacterium carotovorum subsp. carotovorum (strain PC1).